Consider the following 247-residue polypeptide: Ice-binding protein (247 aa).

The first 19 residues, 1–19, serve as a signal peptide directing secretion; the sequence is MTFSILSIFVFGLISSSVA. Asn219 is a glycosylation site (N-linked (GlcNAc...) asparagine).

The protein belongs to the ice-binding protein family.

It localises to the secreted. Its function is as follows. Binds ice crystals and most probably inhibits their growth in order to prevent cell damage from extracellular ice. The sequence is that of Ice-binding protein from Flammulina populicola (Enokitake mushroom).